Reading from the N-terminus, the 85-residue chain is Neurotoxin beta-KTx 14.3 (85 aa).

An N-terminal signal peptide occupies residues 1-20 (MKQYIFFLALIVLTATFAEA). Positions 21 to 37 (GKKTEILDKVKKVFSKG) are excised as a propeptide. A BetaSPN-type CS-alpha/beta domain is found at 49–85 (ELGCPFIEKWCEDHCESKKQVGKCENFDCSCVKLGGK). Cystine bridges form between Cys52-Cys72, Cys59-Cys77, and Cys63-Cys79.

It belongs to the long chain scorpion toxin family. Class 2 subfamily. In terms of tissue distribution, expressed by the venom gland.

It is found in the secreted. Toxin with activity on voltage-gated potassium channels. Moderately and reversibly blocks up to 50% of the activity of Kv7.1/KCNQ1 (tested at 22 uM). 3D-structure modeling of the KCNQ1-toxin complex shows that the toxin interacts with the channel pore domain. Additionally, shows a very weak effect to block voltage-gated potassium channel Kv1.1/KCNA1. Functionally, has a very weak effect to block voltage-gated potassium channel Kv1.1/KCNA1. This is Neurotoxin beta-KTx 14.3 from Lychas mucronatus (Chinese swimming scorpion).